A 206-amino-acid chain; its full sequence is Ras-related protein ralB-B (206 aa).

21-28 (GSGGVGKS) contacts GTP. The Effector region motif lies at 43 to 51 (YEPTKADSY). GTP is bound by residues 68-72 (DTAGQ) and 128-131 (NKSD). The segment covering 180 to 189 (KMSENKDKNG) has biased composition (basic and acidic residues). Residues 180–206 (KMSENKDKNGKKSGKSKKGFKQRCCLL) form a disordered region. A compositionally biased stretch (basic residues) spans 190 to 200 (KKSGKSKKGFK). Residue cysteine 203 is modified to Cysteine methyl ester. Cysteine 203 carries S-geranylgeranyl cysteine lipidation. A propeptide spans 204–206 (CLL) (removed in mature form).

Belongs to the small GTPase superfamily. Ras family. Interacts with ralbp1 and rap1gds1.

Its subcellular location is the cell membrane. It localises to the midbody. It carries out the reaction GTP + H2O = GDP + phosphate + H(+). Its function is as follows. Multifunctional GTPase involved in a variety of cellular processes including gene expression, cell migration, cell proliferation, oncogenic transformation and membrane trafficking. Accomplishes its multiple functions by interacting with distinct downstream effectors. Acts as a GTP sensor for GTP-dependent exocytosis of dense core vesicles. Required both to stabilize the assembly of the exocyst complex and to localize functional exocyst complexes to the leading edge of migrating cells. Required for suppression of apoptosis. In late stages of cytokinesis, upon completion of the bridge formation between dividing cells, mediates exocyst recruitment to the midbody to drive abscission. Regulates the actin cytoskeleton to play a role in gastrulation or neurulation. During the cleavage stages, the GTP-bound form induces a cortical reaction that affects the localization of pigment granules. Activated by the FGF pathway via ras and ral-GDS, but independently of raf. Directs ralbp1 to the plasma membrane. Involved in ligand-dependent receptor mediated endocytosis of the EGF and insulin receptors. The sequence is that of Ras-related protein ralB-B (ralb-b) from Xenopus laevis (African clawed frog).